Here is a 123-residue protein sequence, read N- to C-terminus: Large-conductance mechanosensitive channel (123 aa).

The next 2 helical transmembrane spans lie at 14-34 (VLDL…VTSL) and 67-87 (GNFI…FLLV).

It belongs to the MscL family. As to quaternary structure, homopentamer.

It localises to the cell membrane. Functionally, channel that opens in response to stretch forces in the membrane lipid bilayer. May participate in the regulation of osmotic pressure changes within the cell. The chain is Large-conductance mechanosensitive channel from Lacticaseibacillus casei (strain BL23) (Lactobacillus casei).